We begin with the raw amino-acid sequence, 431 residues long: Tol-Pal system protein TolB (431 aa).

Residues 1–18 (MKALLLSLLLLLPVVALA) form the signal peptide. Residues 410–431 (LPLRTEKGTYQTPDWSPLPQAQ) form a disordered region.

It belongs to the TolB family. The Tol-Pal system is composed of five core proteins: the inner membrane proteins TolA, TolQ and TolR, the periplasmic protein TolB and the outer membrane protein Pal. They form a network linking the inner and outer membranes and the peptidoglycan layer.

The protein resides in the periplasm. Functionally, part of the Tol-Pal system, which plays a role in outer membrane invagination during cell division and is important for maintaining outer membrane integrity. This is Tol-Pal system protein TolB from Myxococcus xanthus.